We begin with the raw amino-acid sequence, 298 residues long: NAD kinase (298 aa).

Asp-80 (proton acceptor) is an active-site residue. Residues 80 to 81 (DG), 154 to 155 (ND), Arg-182, Asp-184, 195 to 200 (TAYALS), Ala-219, and Gln-253 each bind NAD(+).

Belongs to the NAD kinase family. It depends on a divalent metal cation as a cofactor.

It localises to the cytoplasm. It catalyses the reaction NAD(+) + ATP = ADP + NADP(+) + H(+). Its function is as follows. Involved in the regulation of the intracellular balance of NAD and NADP, and is a key enzyme in the biosynthesis of NADP. Catalyzes specifically the phosphorylation on 2'-hydroxyl of the adenosine moiety of NAD to yield NADP. The polypeptide is NAD kinase (Acidovorax sp. (strain JS42)).